A 298-amino-acid polypeptide reads, in one-letter code: Tyrosine recombinase XerD (298 aa).

In terms of domain architecture, Core-binding (CB) spans 3–88 (SSHNNLLQNF…AIRQFYKFLK (86 aa)). Residues 109–292 (SIPDYLTQDE…ANKTLREVHK (184 aa)) form the Tyr recombinase domain. Residues Arg149, Lys173, His244, Arg247, and His270 contribute to the active site. Tyr279 functions as the O-(3'-phospho-DNA)-tyrosine intermediate in the catalytic mechanism.

This sequence belongs to the 'phage' integrase family. XerD subfamily. As to quaternary structure, forms a cyclic heterotetrameric complex composed of two molecules of XerC and two molecules of XerD.

The protein localises to the cytoplasm. Site-specific tyrosine recombinase, which acts by catalyzing the cutting and rejoining of the recombining DNA molecules. The XerC-XerD complex is essential to convert dimers of the bacterial chromosome into monomers to permit their segregation at cell division. It also contributes to the segregational stability of plasmids. The protein is Tyrosine recombinase XerD of Leptospira interrogans serogroup Icterohaemorrhagiae serovar copenhageni (strain Fiocruz L1-130).